We begin with the raw amino-acid sequence, 357 residues long: Peptide chain release factor 1 (357 aa).

Q236 is subject to N5-methylglutamine.

This sequence belongs to the prokaryotic/mitochondrial release factor family. Post-translationally, methylated by PrmC. Methylation increases the termination efficiency of RF1.

It localises to the cytoplasm. Functionally, peptide chain release factor 1 directs the termination of translation in response to the peptide chain termination codons UAG and UAA. This Mycolicibacterium vanbaalenii (strain DSM 7251 / JCM 13017 / BCRC 16820 / KCTC 9966 / NRRL B-24157 / PYR-1) (Mycobacterium vanbaalenii) protein is Peptide chain release factor 1.